Reading from the N-terminus, the 47-residue chain is Defensin Tk-AMP-D1.1 (47 aa).

Intrachain disulfides connect cysteine 3–cysteine 47, cysteine 14–cysteine 34, cysteine 20–cysteine 41, and cysteine 24–cysteine 43.

Functionally, plant defense peptide. The polypeptide is Defensin Tk-AMP-D1.1 (Triticum kiharae (Wheat)).